Consider the following 93-residue polypeptide: MPRSLKKGPFVDGHLMKKVDMAVANSDRRVIKTWTRRSTILPEMVGLTFAVHNGKKFMPVFVTENMVGHKLGEFAPTRTYHGHAADKKSKAKK.

This sequence belongs to the universal ribosomal protein uS19 family.

Protein S19 forms a complex with S13 that binds strongly to the 16S ribosomal RNA. The sequence is that of Small ribosomal subunit protein uS19 from Nitratidesulfovibrio vulgaris (strain ATCC 29579 / DSM 644 / CCUG 34227 / NCIMB 8303 / VKM B-1760 / Hildenborough) (Desulfovibrio vulgaris).